Reading from the N-terminus, the 202-residue chain is Cytochrome c biogenesis ATP-binding export protein CcmA (202 aa).

The ABC transporter domain occupies 3 to 200 (LAAENLSGER…EGTQELKMGA (198 aa)). 35–42 (GPNGAGKS) is an ATP binding site.

This sequence belongs to the ABC transporter superfamily. CcmA exporter (TC 3.A.1.107) family. In terms of assembly, the complex is composed of two ATP-binding proteins (CcmA) and two transmembrane proteins (CcmB).

The protein localises to the cell inner membrane. It carries out the reaction heme b(in) + ATP + H2O = heme b(out) + ADP + phosphate + H(+). Functionally, part of the ABC transporter complex CcmAB involved in the biogenesis of c-type cytochromes; once thought to export heme, this seems not to be the case, but its exact role is uncertain. Responsible for energy coupling to the transport system. This is Cytochrome c biogenesis ATP-binding export protein CcmA from Chelativorans sp. (strain BNC1).